Here is a 500-residue protein sequence, read N- to C-terminus: NAD(P)H-quinone oxidoreductase chain 4, chloroplastic (500 aa).

The next 14 helical transmembrane spans lie at 4-24, 35-55, 87-107, 113-130, 134-154, 167-187, 208-228, 242-262, 272-292, 305-325, 330-350, 386-406, 416-436, and 463-483; these read FPWL…IFFF, YTIC…CYHF, IGPV…AWPV, LFHF…GSFS, LLLF…LLSM, FILY…GMGL, ALEI…LPII, HYST…YGLV, AHSI…IYAA, IAYS…SITD, GAIL…FLAG, LALP…GIIT, ILIT…SLSM, and FVSI…DFVF.

Belongs to the complex I subunit 4 family.

It localises to the plastid. It is found in the chloroplast thylakoid membrane. The catalysed reaction is a plastoquinone + NADH + (n+1) H(+)(in) = a plastoquinol + NAD(+) + n H(+)(out). The enzyme catalyses a plastoquinone + NADPH + (n+1) H(+)(in) = a plastoquinol + NADP(+) + n H(+)(out). This Nandina domestica (Heavenly bamboo) protein is NAD(P)H-quinone oxidoreductase chain 4, chloroplastic.